We begin with the raw amino-acid sequence, 120 residues long: Large ribosomal subunit protein eL8 (120 aa).

It belongs to the eukaryotic ribosomal protein eL8 family. As to quaternary structure, part of the 50S ribosomal subunit. Probably part of the RNase P complex.

Its subcellular location is the cytoplasm. Functionally, multifunctional RNA-binding protein that recognizes the K-turn motif in ribosomal RNA, the RNA component of RNase P, box H/ACA, box C/D and box C'/D' sRNAs. The sequence is that of Large ribosomal subunit protein eL8 from Natronomonas pharaonis (strain ATCC 35678 / DSM 2160 / CIP 103997 / JCM 8858 / NBRC 14720 / NCIMB 2260 / Gabara) (Halobacterium pharaonis).